The primary structure comprises 135 residues: Ribonuclease P protein component (135 aa).

This sequence belongs to the RnpA family. Consists of a catalytic RNA component (M1 or rnpB) and a protein subunit.

The catalysed reaction is Endonucleolytic cleavage of RNA, removing 5'-extranucleotides from tRNA precursor.. Functionally, RNaseP catalyzes the removal of the 5'-leader sequence from pre-tRNA to produce the mature 5'-terminus. It can also cleave other RNA substrates such as 4.5S RNA. The protein component plays an auxiliary but essential role in vivo by binding to the 5'-leader sequence and broadening the substrate specificity of the ribozyme. This Saccharophagus degradans (strain 2-40 / ATCC 43961 / DSM 17024) protein is Ribonuclease P protein component.